Reading from the N-terminus, the 168-residue chain is MVDMQSLDEEDFSVSKSSDADAEFDIVIGNIEDIIMEDEFQHLQQSFMEKYYLEFDDSEENKLSYTPIFNEYIEILEKHLEQQLVERIPGFNMDAFTHSLKQHKDEVSGDILDMLLTFTDFMAFKEMFTDYRAEKEGRGLDLSTGLVVKSLNSSSASPLTPSMASQSI.

Belongs to the ARL2BP family.

It localises to the cytoplasm. Its subcellular location is the mitochondrion intermembrane space. It is found in the cytoskeleton. The protein resides in the microtubule organizing center. The protein localises to the centrosome. It localises to the nucleus. Its subcellular location is the spindle. It is found in the cilium basal body. Functionally, plays a role as an effector of the ADP-ribosylation factor-like protein 2, ARL2. This chain is ADP-ribosylation factor-like protein 2-binding protein (arl2bp), found in Danio rerio (Zebrafish).